An 84-amino-acid polypeptide reads, in one-letter code: MNLIPRTSIVVYLKHMKHERQIRKYGHIVHSNRDRKFVIMYVNEQDVDQIVHKLMQLKYVRHIDGSPYKYLKKTYEKEKHEIYN.

This sequence belongs to the UPF0298 family.

The protein localises to the cytoplasm. This chain is UPF0298 protein NWMN_0985, found in Staphylococcus aureus (strain Newman).